The chain runs to 328 residues: 2-hydroxyisoflavanone dehydratase (328 aa).

An Involved in the stabilization of the negatively charged intermediate by the formation of the oxyanion hole motif is present at residues 85 to 87 (HGG). Catalysis depends on residues threonine 173, aspartate 272, and histidine 304.

This sequence belongs to the 'GDXG' lipolytic enzyme family.

It catalyses the reaction (2R,3S)-2,4',7-trihydroxyisoflavanone = daidzein + H2O + H(+). The enzyme catalyses 2-hydroxy-2,3-dihydrogenistein = genistein + H2O + H(+). It carries out the reaction a carboxylic ester + H2O = an alcohol + a carboxylate + H(+). The protein operates within secondary metabolite biosynthesis; flavonoid biosynthesis. Functionally, dehydratase that mediates the biosynthesis of isoflavonoids. Can better use 2,7-dihydroxy-4'-methoxyisoflavanone as substrate. Has also a slight carboxylesterase activity toward p-nitrophenyl butyrate. The sequence is that of 2-hydroxyisoflavanone dehydratase (HIDM) from Glycyrrhiza echinata (Licorice).